The primary structure comprises 298 residues: MAPKVVDRRNTMPQLQAKSLEMRTPQATKTAVLVIGGAEDKVHGREILRTFFGRAGASKAYITIIPSASREPAIIGGRYIRIFEEMGAEKVEILDIREREQCESSQVKASLEACSGVFLTGGDQLRLCGVLSDTPVMEIIRQRVRGGQLTLAGTSAGAAVMGHHMIAGGGSGETPNRSLVDMATGLGLIPEVIVDQHFHNRNRMGRLISAVAAHPDRLGIGIDEDTCAVFERDGWLQVLGKGSVTIVDPTELTHTNEPHVGANEPLTVHNLRLHILSYGDRFHLYQRTVLPAVHRISS.

Active-site charge relay system residues include serine 155, glutamate 173, and histidine 197.

It belongs to the peptidase S51 family.

The catalysed reaction is [L-4-(L-arginin-2-N-yl)aspartate](n) + H2O = [L-4-(L-arginin-2-N-yl)aspartate](n-1) + L-4-(L-arginin-2-N-yl)aspartate. Exopeptidase that catalyzes the hydrolytic cleavage of multi-L-arginyl-poly-L-aspartic acid (cyanophycin; a water-insoluble reserve polymer) into aspartate-arginine dipeptides. This is Cyanophycinase (cphB) from Nostoc sp. (strain PCC 7120 / SAG 25.82 / UTEX 2576).